A 270-amino-acid polypeptide reads, in one-letter code: Undecaprenyl-diphosphatase (270 aa).

Transmembrane regions (helical) follow at residues 14–34, 40–60, 88–108, 117–137, 146–166, 189–209, 221–241, and 249–269; these read GLTEVLPISSSAHLILIPTFL, GITFDVALHLGTFIALCLYFW, FYIIAGTFPAAIVGKLFETTI, SLIALFLIVFALLLAFADTSG, ITLKSAIIIGLAQCLALIPGV, FSFLLSLPIVAGAALFELSGL, PLLIGIATSAVFGYISVAFLL, and LYPFVWYRIAIGCLALVFINF.

Belongs to the UppP family.

The protein localises to the cell inner membrane. It carries out the reaction di-trans,octa-cis-undecaprenyl diphosphate + H2O = di-trans,octa-cis-undecaprenyl phosphate + phosphate + H(+). Its function is as follows. Catalyzes the dephosphorylation of undecaprenyl diphosphate (UPP). Confers resistance to bacitracin. The polypeptide is Undecaprenyl-diphosphatase (Geotalea daltonii (strain DSM 22248 / JCM 15807 / FRC-32) (Geobacter daltonii)).